We begin with the raw amino-acid sequence, 203 residues long: 3-isopropylmalate dehydratase small subunit (203 aa).

The protein belongs to the LeuD family. LeuD type 1 subfamily. As to quaternary structure, heterodimer of LeuC and LeuD.

It carries out the reaction (2R,3S)-3-isopropylmalate = (2S)-2-isopropylmalate. Its pathway is amino-acid biosynthesis; L-leucine biosynthesis; L-leucine from 3-methyl-2-oxobutanoate: step 2/4. Catalyzes the isomerization between 2-isopropylmalate and 3-isopropylmalate, via the formation of 2-isopropylmaleate. The protein is 3-isopropylmalate dehydratase small subunit of Phenylobacterium zucineum (strain HLK1).